The chain runs to 85 residues: Small ribosomal subunit protein bS18 (85 aa).

This sequence belongs to the bacterial ribosomal protein bS18 family. In terms of assembly, part of the 30S ribosomal subunit. Forms a tight heterodimer with protein bS6.

Functionally, binds as a heterodimer with protein bS6 to the central domain of the 16S rRNA, where it helps stabilize the platform of the 30S subunit. This Helicobacter pylori (strain P12) protein is Small ribosomal subunit protein bS18.